The sequence spans 249 residues: Type III pantothenate kinase (249 aa).

6–13 (DVGNTHTT) serves as a coordination point for ATP. Residue 101–104 (GADR) coordinates substrate. Aspartate 103 (proton acceptor) is an active-site residue. Aspartate 123 is a binding site for K(+). Threonine 126 is an ATP binding site. Threonine 177 is a substrate binding site.

It belongs to the type III pantothenate kinase family. In terms of assembly, homodimer. It depends on NH4(+) as a cofactor. K(+) is required as a cofactor.

Its subcellular location is the cytoplasm. It catalyses the reaction (R)-pantothenate + ATP = (R)-4'-phosphopantothenate + ADP + H(+). Its pathway is cofactor biosynthesis; coenzyme A biosynthesis; CoA from (R)-pantothenate: step 1/5. In terms of biological role, catalyzes the phosphorylation of pantothenate (Pan), the first step in CoA biosynthesis. The polypeptide is Type III pantothenate kinase (Thermosipho africanus (strain TCF52B)).